The primary structure comprises 359 residues: S-adenosylmethionine:tRNA ribosyltransferase-isomerase (359 aa).

The protein belongs to the QueA family. Monomer.

The protein resides in the cytoplasm. It carries out the reaction 7-aminomethyl-7-carbaguanosine(34) in tRNA + S-adenosyl-L-methionine = epoxyqueuosine(34) in tRNA + adenine + L-methionine + 2 H(+). It functions in the pathway tRNA modification; tRNA-queuosine biosynthesis. Transfers and isomerizes the ribose moiety from AdoMet to the 7-aminomethyl group of 7-deazaguanine (preQ1-tRNA) to give epoxyqueuosine (oQ-tRNA). The sequence is that of S-adenosylmethionine:tRNA ribosyltransferase-isomerase from Alcanivorax borkumensis (strain ATCC 700651 / DSM 11573 / NCIMB 13689 / SK2).